A 658-amino-acid chain; its full sequence is Outer dynein arm-docking complex subunit 1 (658 aa).

Coiled coils occupy residues 11 to 156 (KEVH…RYLN), 186 to 234 (REEA…KNDE), and 303 to 380 (NFIN…TDIQ). Disordered regions lie at residues 496–552 (DEEE…SVSH) and 574–658 (GAPV…RGYN). Phosphoserine is present on residues Ser-500, Ser-506, Ser-507, and Ser-509. 4 stretches are compositionally biased toward low complexity: residues 506-519 (SSPS…QISL), 574-583 (GAPVSSRSSQ), 592-604 (TSSS…TGYL), and 621-639 (SMGS…HASS).

Belongs to the ODA1/DCC2 family. In terms of assembly, component of the outer dynein arm-docking complex along with ODAD2, ODAD3, ODAD4 and CLXN. Interacts with ODAD3. Interacts with ODAD4; this interaction may facilitate the recruitment and/or attachment of outer dynein arm docking complex proteins including ODAD1, ODAD3, and ODAD4 to ciliary axonemes. Interacts with DNAH9. Interacts with MNS1. Interacts with PIERCE1 and PIERCE2; the interactions link the outer dynein arms docking complex (ODA-DC) to the internal microtubule inner proteins (MIP) in cilium axoneme. In terms of tissue distribution, expressed in motile ciliated tissues.

The protein localises to the cytoplasm. It localises to the cytoskeleton. Its subcellular location is the cilium axoneme. Component of the outer dynein arm-docking complex that mediates outer dynein arms (ODA) binding onto the doublet microtubule. Involved in mediating assembly of both ODAs and their axonemal docking complex onto ciliary microtubules. This is Outer dynein arm-docking complex subunit 1 (Odad1) from Mus musculus (Mouse).